We begin with the raw amino-acid sequence, 230 residues long: Ureidoacrylate amidohydrolase RutB (230 aa).

Residue aspartate 24 is the Proton acceptor of the active site. Lysine 133 is an active-site residue. Catalysis depends on cysteine 166, which acts as the Nucleophile.

Belongs to the isochorismatase family. RutB subfamily.

The enzyme catalyses (Z)-3-ureidoacrylate + H2O + H(+) = (Z)-3-aminoacrylate + NH4(+) + CO2. The catalysed reaction is (Z)-3-ureidoacrylate + H2O = (Z)-3-aminoacrylate + carbamate + H(+). It catalyses the reaction (Z)-2-methylureidoacrylate + H2O + H(+) = (Z)-2-methylaminoacrylate + NH4(+) + CO2. Functionally, hydrolyzes ureidoacrylate to form aminoacrylate and carbamate. The carbamate hydrolyzes spontaneously, thereby releasing one of the nitrogen atoms of the pyrimidine ring as ammonia and one of its carbon atoms as CO2. This chain is Ureidoacrylate amidohydrolase RutB, found in Escherichia coli O150:H5 (strain SE15).